Here is a 625-residue protein sequence, read N- to C-terminus: tRNA uridine 5-carboxymethylaminomethyl modification enzyme MnmG (625 aa).

FAD is bound by residues 9–14 (GGGHAG), Val-121, and Ser-176. An NAD(+)-binding site is contributed by 270–284 (GPRYCPSIEDKIYRF). Position 367 (Gln-367) interacts with FAD.

Belongs to the MnmG family. In terms of assembly, homodimer. Heterotetramer of two MnmE and two MnmG subunits. Requires FAD as cofactor.

It localises to the cytoplasm. Functionally, NAD-binding protein involved in the addition of a carboxymethylaminomethyl (cmnm) group at the wobble position (U34) of certain tRNAs, forming tRNA-cmnm(5)s(2)U34. In Nitratiruptor sp. (strain SB155-2), this protein is tRNA uridine 5-carboxymethylaminomethyl modification enzyme MnmG.